The chain runs to 460 residues: tRNA modification GTPase MnmE (460 aa).

Residues Arg22, Glu83, and Lys122 each coordinate (6S)-5-formyl-5,6,7,8-tetrahydrofolate. In terms of domain architecture, TrmE-type G spans 219–381; the sequence is GIKTLIIGRP…LQQTILKKFQ (163 aa). Asn229 lines the K(+) pocket. Residues 229–234, 248–254, and 273–276 contribute to the GTP site; these read NVGKSS, SDISGTT, and DTAG. Ser233 is a Mg(2+) binding site. K(+) contacts are provided by Ser248, Ile250, and Thr253. Residue Thr254 coordinates Mg(2+). Lys460 is a (6S)-5-formyl-5,6,7,8-tetrahydrofolate binding site.

Belongs to the TRAFAC class TrmE-Era-EngA-EngB-Septin-like GTPase superfamily. TrmE GTPase family. In terms of assembly, homodimer. Heterotetramer of two MnmE and two MnmG subunits. K(+) is required as a cofactor.

The protein resides in the cytoplasm. In terms of biological role, exhibits a very high intrinsic GTPase hydrolysis rate. Involved in the addition of a carboxymethylaminomethyl (cmnm) group at the wobble position (U34) of certain tRNAs, forming tRNA-cmnm(5)s(2)U34. In Aster yellows witches'-broom phytoplasma (strain AYWB), this protein is tRNA modification GTPase MnmE.